Consider the following 344-residue polypeptide: MTSNILLLLHPTVVTDQHIVENIKLKISNTHKDFHLSQTTIDRLTQGSIEFDNNSFDEIIYINPNEEQYREIPNSLMKLIFDLLKLNGKFTGDLPTDQNLDVLMNGFLIINQNEWNKPQPEETVVTLKKKSTTTNNNSNTSTIKKSFPMFKKLNNDNASTPGLTDSSAGTSEDETATVSNKRKLVESKLVYFSDDDDDDDYDGSSDGEDLINENDLIAESNKYKIIVPKKCELPNGKKRKKACKDCTCGLKELEEEEIKSQGKLQDTVLANMAQSATIEAIKIEERMKKNKIKFTEEDLSEIDFTVAGKTGGCGSCSLGDAFRCDGCPFLGLPPFKPGEVVRID.

The segment at 1–160 (MTSNILLLLH…KKLNNDNAST (160 aa)) is N-terminal SAM-like domain. Positions 154-179 (NNDNASTPGLTDSSAGTSEDETATVS) are disordered. A compositionally biased stretch (polar residues) spans 155 to 170 (NDNASTPGLTDSSAGT). Residues 161–223 (PGLTDSSAGT…NDLIAESNKY (63 aa)) are linker. 4 residues coordinate [2Fe-2S] cluster: cysteine 231, cysteine 243, cysteine 246, and cysteine 248. Residues 231-248 (CELPNGKKRKKACKDCTC) form a fe-S binding site A region. Residues cysteine 313, cysteine 316, cysteine 324, and cysteine 327 each coordinate [4Fe-4S] cluster. Short sequence motifs (cx2C motif) lie at residues 313-316 (CGSC) and 324-327 (CDGC). The tract at residues 313–327 (CGSCSLGDAFRCDGC) is fe-S binding site B.

The protein belongs to the anamorsin family. As to quaternary structure, monomer. Interacts with TAH18. Interacts with MIA40. It depends on [2Fe-2S] cluster as a cofactor. [4Fe-4S] cluster is required as a cofactor.

The protein localises to the cytoplasm. It localises to the mitochondrion intermembrane space. Component of the cytosolic iron-sulfur (Fe-S) protein assembly (CIA) machinery required for the maturation of extramitochondrial Fe-S proteins. Part of an electron transfer chain functioning in an early step of cytosolic Fe-S biogenesis, facilitating the de novo assembly of a [4Fe-4S] cluster on the scaffold complex CFD1-NBP35. Electrons are transferred to DRE2 from NADPH via the FAD- and FMN-containing protein TAH18. TAH18-DRE2 are also required for the assembly of the diferric tyrosyl radical cofactor of ribonucleotide reductase (RNR), probably by providing electrons for reduction during radical cofactor maturation in the catalytic small subunit RNR2. This chain is Fe-S cluster assembly protein DRE2, found in Candida tropicalis (strain ATCC MYA-3404 / T1) (Yeast).